Reading from the N-terminus, the 78-residue chain is MTSTNGPSARDTGFVEGQQAKTQLLTVAEVAALMRVSKMTVYRLVHNGELPAVRVGRSFRVHAKAVHDMLETSYFDAG.

Residues 24–45 (LLTVAEVAALMRVSKMTVYRLV) constitute a DNA-binding region (H-T-H motif).

The protein is Putative DNA-binding protein MT0521 of Mycobacterium tuberculosis (strain CDC 1551 / Oshkosh).